We begin with the raw amino-acid sequence, 656 residues long: uncharacterized protein (656 aa).

This is an uncharacterized protein from Rickettsia prowazekii (strain Madrid E).